The chain runs to 154 residues: SsrA-binding protein (154 aa).

This sequence belongs to the SmpB family.

The protein resides in the cytoplasm. Its function is as follows. Required for rescue of stalled ribosomes mediated by trans-translation. Binds to transfer-messenger RNA (tmRNA), required for stable association of tmRNA with ribosomes. tmRNA and SmpB together mimic tRNA shape, replacing the anticodon stem-loop with SmpB. tmRNA is encoded by the ssrA gene; the 2 termini fold to resemble tRNA(Ala) and it encodes a 'tag peptide', a short internal open reading frame. During trans-translation Ala-aminoacylated tmRNA acts like a tRNA, entering the A-site of stalled ribosomes, displacing the stalled mRNA. The ribosome then switches to translate the ORF on the tmRNA; the nascent peptide is terminated with the 'tag peptide' encoded by the tmRNA and targeted for degradation. The ribosome is freed to recommence translation, which seems to be the essential function of trans-translation. This chain is SsrA-binding protein, found in Acetivibrio thermocellus (strain ATCC 27405 / DSM 1237 / JCM 9322 / NBRC 103400 / NCIMB 10682 / NRRL B-4536 / VPI 7372) (Clostridium thermocellum).